The following is a 950-amino-acid chain: General transcription factor II-I repeat domain-containing protein 2 (950 aa).

2 GTF2I-like repeats span residues 100-194 (QVDS…QPGG) and 324-418 (LSSL…SNVG).

The protein belongs to the TFII-I family.

The protein resides in the nucleus. The sequence is that of General transcription factor II-I repeat domain-containing protein 2 (GTF2IRD2) from Bos taurus (Bovine).